The chain runs to 270 residues: Replication protein A 32 kDa subunit (270 aa).

Met1 is subject to N-acetylmethionine. Residues Ser4 and Ser8 each carry the phosphoserine; by PRKDC modification. Thr21 is modified (phosphothreonine; by PRKDC). The interval 22–41 (QSPGGFGSPTPSQAEKKSRA) is disordered. Ser23 is modified (phosphoserine; by CDK2). Ser29 carries the post-translational modification Phosphoserine; by CDK1. Ser33 bears the Phosphoserine; by PRKDC mark. Residues Lys37 and Lys38 each participate in a glycyl lysine isopeptide (Lys-Gly) (interchain with G-Cter in ubiquitin) cross-link. A DNA-binding region (OB) is located at residues 74–148 (VTIVGIIRHA…KSLVAFKIIP (75 aa)). Positions 187–270 (GMGEPGNFSG…DDHFKSTDAE (84 aa)) are interaction with RAD52, TIPIN, UNG and XPA.

It belongs to the replication factor A protein 2 family. In terms of assembly, component of the replication protein A complex (RPA/RP-A), a heterotrimeric complex composed of RPA1, RPA2 and RPA3. Interacts with PRPF19; the PRP19-CDC5L complex is recruited to the sites of DNA repair where it ubiquitinates the replication protein A complex (RPA). Interacts with SERTAD3. Interacts with TIPIN. Interacts with TIMELESS. Interacts with PPP4R2; the interaction is direct, DNA damage-dependent and mediates the recruitment of the PP4 catalytic subunit PPP4C. Interacts (hyperphosphorylated) with RAD51. Interacts with SMARCAL1; the interaction is direct and mediates the recruitment to the RPA complex of SMARCAL1. Interacts with RAD52 and XPA; those interactions are direct and associate RAD52 and XPA to the RPA complex. Interacts with FBH1. Interacts with ETAA1; the interaction is direct and promotes ETAA1 recruitment at stalled replication forks. Interacts with DDI2. Interacts (in unphosphorylated form via N-terminus) with EIF4EBP3; the interaction enhances EIF4EBP3-mediated inhibition of EIF4E-mediated mRNA nuclear export. Interacts with nuclear UNG (isoform 2); this interaction mediates UNG recruitment to RPA-coated single-stranded DNA at stalled replication forks. In terms of processing, differentially phosphorylated throughout the cell cycle, becoming phosphorylated at the G1-S transition and dephosphorylated in late mitosis. Mainly phosphorylated at Ser-23 and Ser-29, by cyclin A-CDK2 and cyclin B-CDK1, respectively during DNA replication and mitosis. Dephosphorylation may require the serine/threonine-protein phosphatase 4. Phosphorylation at Ser-23 and Ser-29 is a prerequisite for further phosphorylation. Becomes hyperphosphorylated on additional residues including Ser-4, Ser-8, Thr-21 and Ser-33 in response to DNA damage. Hyperphosphorylation is mediated by ATM, ATR and PRKDC. Primarily recruited to DNA repair nuclear foci as a hypophosphorylated form it undergoes subsequent hyperphosphorylation, catalyzed by ATR. Hyperphosphorylation is required for RAD51 recruitment to chromatin and efficient DNA repair. Phosphorylation at Thr-21 depends upon RFWD3 presence. Post-translationally, DNA damage-induced 'Lys-63'-linked polyubiquitination by PRPF19 mediates ATRIP recruitment to the RPA complex at sites of DNA damage and activation of ATR. Ubiquitinated by RFWD3 at stalled replication forks in response to DNA damage: ubiquitination by RFWD3 does not lead to degradation by the proteasome and promotes removal of the RPA complex from stalled replication forks, promoting homologous recombination.

The protein localises to the nucleus. The protein resides in the PML body. Its function is as follows. As part of the heterotrimeric replication protein A complex (RPA/RP-A), binds and stabilizes single-stranded DNA intermediates, that form during DNA replication or upon DNA stress. It prevents their reannealing and in parallel, recruits and activates different proteins and complexes involved in DNA metabolism. Thereby, it plays an essential role both in DNA replication and the cellular response to DNA damage. In the cellular response to DNA damage, the RPA complex controls DNA repair and DNA damage checkpoint activation. Through recruitment of ATRIP activates the ATR kinase a master regulator of the DNA damage response. It is required for the recruitment of the DNA double-strand break repair factors RAD51 and RAD52 to chromatin in response to DNA damage. Also recruits to sites of DNA damage proteins like XPA and XPG that are involved in nucleotide excision repair and is required for this mechanism of DNA repair. Also plays a role in base excision repair (BER) probably through interaction with UNG. Also recruits SMARCAL1/HARP, which is involved in replication fork restart, to sites of DNA damage. May also play a role in telomere maintenance. The sequence is that of Replication protein A 32 kDa subunit (Rpa2) from Rattus norvegicus (Rat).